Reading from the N-terminus, the 173-residue chain is Protein GrpE (173 aa).

Over residues Met1–Thr20 the composition is skewed to basic and acidic residues. Residues Met1 to Ser23 form a disordered region.

Belongs to the GrpE family. In terms of assembly, homodimer.

It is found in the cytoplasm. Functionally, participates actively in the response to hyperosmotic and heat shock by preventing the aggregation of stress-denatured proteins, in association with DnaK and GrpE. It is the nucleotide exchange factor for DnaK and may function as a thermosensor. Unfolded proteins bind initially to DnaJ; upon interaction with the DnaJ-bound protein, DnaK hydrolyzes its bound ATP, resulting in the formation of a stable complex. GrpE releases ADP from DnaK; ATP binding to DnaK triggers the release of the substrate protein, thus completing the reaction cycle. Several rounds of ATP-dependent interactions between DnaJ, DnaK and GrpE are required for fully efficient folding. This chain is Protein GrpE, found in Thiobacillus denitrificans (strain ATCC 25259 / T1).